The chain runs to 523 residues: ATP synthase subunit alpha (523 aa).

173 to 180 (GDRQTGKT) lines the ATP pocket.

The protein belongs to the ATPase alpha/beta chains family. In terms of assembly, F-type ATPases have 2 components, CF(1) - the catalytic core - and CF(0) - the membrane proton channel. CF(1) has five subunits: alpha(3), beta(3), gamma(1), delta(1), epsilon(1). CF(0) has three main subunits: a(1), b(2) and c(9-12). The alpha and beta chains form an alternating ring which encloses part of the gamma chain. CF(1) is attached to CF(0) by a central stalk formed by the gamma and epsilon chains, while a peripheral stalk is formed by the delta and b chains.

Its subcellular location is the cell membrane. The enzyme catalyses ATP + H2O + 4 H(+)(in) = ADP + phosphate + 5 H(+)(out). In terms of biological role, produces ATP from ADP in the presence of a proton gradient across the membrane. The alpha chain is a regulatory subunit. This chain is ATP synthase subunit alpha, found in Streptomyces griseus subsp. griseus (strain JCM 4626 / CBS 651.72 / NBRC 13350 / KCC S-0626 / ISP 5235).